The primary structure comprises 383 residues: UDP-N-acetylenolpyruvoylglucosamine reductase (383 aa).

Residues 42–212 (LSCQAMQLIT…TRVGFKLHKD (171 aa)) form the FAD-binding PCMH-type domain. Residue arginine 189 is part of the active site. The active-site Proton donor is the serine 267. Glutamate 369 is a catalytic residue.

Belongs to the MurB family. It depends on FAD as a cofactor.

Its subcellular location is the cytoplasm. It carries out the reaction UDP-N-acetyl-alpha-D-muramate + NADP(+) = UDP-N-acetyl-3-O-(1-carboxyvinyl)-alpha-D-glucosamine + NADPH + H(+). The protein operates within cell wall biogenesis; peptidoglycan biosynthesis. Functionally, cell wall formation. This is UDP-N-acetylenolpyruvoylglucosamine reductase from Psychrobacter sp. (strain PRwf-1).